Consider the following 477-residue polypeptide: Salivary plasminogen activator alpha 2 (477 aa).

The first 36 residues, 1–36, serve as a signal peptide directing secretion; it reads MVNTMKTKLLCVLLLCGAVFSLPRQETYRQLARGSR. In terms of domain architecture, Fibronectin type-I spans 40–82; sequence VACRDEKTQMIYQQQESWLRPEVRSKRVEHCRCDRGLAQCHTV. Disulfide bonds link C42–C72, C70–C79, C87–C98, C92–C109, C111–C120, C128–C209, C149–C191, C180–C204, C214–C345, C257–C273, C265–C334, C359–C434, C391–C407, and C424–C452. The EGF-like domain occupies 83-121; the sequence is PVKSCSELRCFNGGTCWQAASFSDFVCQCPKGYTGKQCE. Positions 128–209 constitute a Kringle domain; that stretch reads CYKDQGVTYR…ILEFCSVPVC (82 aa). A glycan (N-linked (GlcNAc...) asparagine) is linked at N185. In terms of domain architecture, Peptidase S1 spans 226–476; the sequence is STGGLFTDIT…YLGWIRDNMR (251 aa). Active-site charge relay system residues include H272 and D321. N398 is a glycosylation site (N-linked (GlcNAc...) asparagine). Catalysis depends on S428, which acts as the Charge relay system.

This sequence belongs to the peptidase S1 family. Monomer.

The protein resides in the secreted. The enzyme catalyses Specific cleavage of Arg-|-Val bond in plasminogen to form plasmin.. With respect to regulation, activity toward plasminogen is stimulated in the presence of fibrin I. Probably essential to support the feeding habits of this exclusively haematophagous animal. Probable potent thrombolytic agent. The chain is Salivary plasminogen activator alpha 2 from Desmodus rotundus (Vampire bat).